The following is a 385-amino-acid chain: ATP phosphoribosyltransferase regulatory subunit (385 aa).

Belongs to the class-II aminoacyl-tRNA synthetase family. HisZ subfamily. Heteromultimer composed of HisG and HisZ subunits.

The protein localises to the cytoplasm. It participates in amino-acid biosynthesis; L-histidine biosynthesis; L-histidine from 5-phospho-alpha-D-ribose 1-diphosphate: step 1/9. In terms of biological role, required for the first step of histidine biosynthesis. May allow the feedback regulation of ATP phosphoribosyltransferase activity by histidine. This is ATP phosphoribosyltransferase regulatory subunit from Bordetella pertussis (strain Tohama I / ATCC BAA-589 / NCTC 13251).